A 272-amino-acid chain; its full sequence is HMP-PP phosphatase (272 aa).

Aspartate 8 functions as the Nucleophile in the catalytic mechanism. Aspartate 8, aspartate 10, and aspartate 212 together coordinate Mg(2+).

It belongs to the HAD-like hydrolase superfamily. Cof family. It depends on Mg(2+) as a cofactor.

The enzyme catalyses 4-amino-2-methyl-5-(diphosphooxymethyl)pyrimidine + H2O = 4-amino-2-methyl-5-(phosphooxymethyl)pyrimidine + phosphate + H(+). Its function is as follows. Catalyzes the hydrolysis of 4-amino-2-methyl-5-hydroxymethylpyrimidine pyrophosphate (HMP-PP) to 4-amino-2-methyl-5-hydroxymethylpyrimidine phosphate (HMP-P). The protein is HMP-PP phosphatase of Salmonella choleraesuis (strain SC-B67).